Reading from the N-terminus, the 193-residue chain is Adenine phosphoribosyltransferase (193 aa).

This sequence belongs to the purine/pyrimidine phosphoribosyltransferase family. Homodimer.

The protein localises to the cytoplasm. The enzyme catalyses AMP + diphosphate = 5-phospho-alpha-D-ribose 1-diphosphate + adenine. Its pathway is purine metabolism; AMP biosynthesis via salvage pathway; AMP from adenine: step 1/1. Functionally, catalyzes a salvage reaction resulting in the formation of AMP, that is energically less costly than de novo synthesis. The protein is Adenine phosphoribosyltransferase of Bifidobacterium longum subsp. infantis (strain ATCC 15697 / DSM 20088 / JCM 1222 / NCTC 11817 / S12).